A 342-amino-acid chain; its full sequence is L-threonine 3-dehydrogenase (342 aa).

Cys38 is a Zn(2+) binding site. Active-site charge relay system residues include Thr40 and His43. The Zn(2+) site is built by His63, Glu64, Cys93, Cys96, Cys99, and Cys107. Residues Ile175, Asp195, Arg200, 262–264, and 286–287 each bind NAD(+); these read LGI and IY.

The protein belongs to the zinc-containing alcohol dehydrogenase family. As to quaternary structure, homotetramer. It depends on Zn(2+) as a cofactor.

Its subcellular location is the cytoplasm. The enzyme catalyses L-threonine + NAD(+) = (2S)-2-amino-3-oxobutanoate + NADH + H(+). It participates in amino-acid degradation; L-threonine degradation via oxydo-reductase pathway; glycine from L-threonine: step 1/2. Functionally, catalyzes the NAD(+)-dependent oxidation of L-threonine to 2-amino-3-ketobutyrate. The sequence is that of L-threonine 3-dehydrogenase from Burkholderia multivorans (strain ATCC 17616 / 249).